A 152-amino-acid chain; its full sequence is Small ribosomal subunit protein uS13 (152 aa).

N-acetylserine is present on Ser-2. A Glycyl lysine isopeptide (Lys-Gly) (interchain with G-Cter in SUMO2) cross-link involves residue Lys-91. An N6-acetyllysine; alternate mark is found at Lys-94 and Lys-106. Glycyl lysine isopeptide (Lys-Gly) (interchain with G-Cter in SUMO2); alternate cross-links involve residues Lys-94 and Lys-106.

It belongs to the universal ribosomal protein uS13 family. As to quaternary structure, component of the small ribosomal subunit.

The protein resides in the cytoplasm. Its function is as follows. Component of the small ribosomal subunit. The ribosome is a large ribonucleoprotein complex responsible for the synthesis of proteins in the cell. This is Small ribosomal subunit protein uS13 (RPS18) from Homo sapiens (Human).